A 981-amino-acid polypeptide reads, in one-letter code: MLPNRKPPRPSPSFQSLNNNNQRFPLRRSLKIAQAHSLPTVPSEDAKDDDLITPELSTDFDFREIQHRYLMALQNEQDGETTSTDDAFFELDDDDDLSSPSVPGSPVDPPSISVPLPPKSAPPCPTQPAPLTNGDLYPTILSNGTPIPNGRITPALSTVSVSLIHEARLQQSLSTPCNGSEEEMHNGQVRKESEYRRFKSEGSTAGASLPAAEKTHMDELSPVDQRSTSGTARFLIQQDSVVNPSTKMSNTEQVAMMHTLKTKLSKYQAMMDKAFEEIAKVEDANIIEGCTIVRKLMRKVWNTPKVSADLANALCDYLRDRDYFDKLIKMFISPNTAACDQVRMECGKVLEECTSSANLEYIVNKSYTKKIMIVAMKLNKTPDQQRLSLSLIGNLFKHSNAVSLSLIETDVIDHIILTFKRAPECPDILRHAALALANILLYTCFEGKKKIIQKKIPEWLFFLASQADDVTRYYACIAVCTIVSVKEFEPLVRKSDTMKLVEPFLQVHDPATFARDYHKYAQGNTKEWLERLLPMLQPSRRREARSVAAFHFTLEATIKKEQNKLDVFQEIGAIQALKEVASSPDEVAAKFASEALTVIGEEVPYKLAQQVPGWTCADVQYWVKKIGFEEYVEKFAKQMVDGDLLLQLTENDLKHDVGMISGLHRKRFLRELQTLKVAADYSSVDESNLDNFLMGLSPELSVYTYQMLTNGVNRSLLSSLTDEMMQNACGITNPIHRLKLTQAFETAKHPDDVEVAMLSKQIDVFISYRRSTGNQLASLIKVLLQLRGYRVFIDVDKLYAGKFDSSLLKNIQAAKHFILVLTPNSLDRLLNDDNCEDWVHKELKCAFEHQKNIIPIFDTAFEFPTKEDQIPNDIRMITKYNGVKWVHDYQDACMAKVVRFITGELNRTTPTTKEMPSISRKTTQQRWQTTNTVSRTGPSRSIGGPRMEPPTPTFTPTGSQERATSTRRKIQPSASTTSDRN.

Disordered stretches follow at residues Met-1–Lys-31, Gln-74–Pro-128, and Leu-173–Gln-225. 2 stretches are compositionally biased toward polar residues: residues Pro-12 to Arg-23 and Gln-74 to Asp-85. Over residues Ala-87–Leu-97 the composition is skewed to acidic residues. The span at Ser-98–Val-114 shows a compositional bias: low complexity. The segment covering Pro-115–Pro-128 has biased composition (pro residues). The segment covering Glu-182–Ser-200 has biased composition (basic and acidic residues). 2 consecutive SAM domains span residues Trp-614–Ala-678 and Val-684–Pro-750. The 98-residue stretch at Lys-760–Phe-857 folds into the TIR domain. NAD(+) is bound at residue Arg-769 to Arg-770. Glu-842 is an active-site residue. Composition is skewed to polar residues over residues Thr-908 to Ser-939, Phe-954 to Ala-963, and Pro-972 to Asn-981. Residues Thr-908 to Asn-981 are disordered.

The protein belongs to the SARM1 family. In terms of assembly, homodimer. Interacts with rab-1, pal-1 and unc-43. In terms of tissue distribution, highly expressed in hypodermis. Localizes to postsynaptic regions of axons.

It localises to the cytoplasm. It carries out the reaction NAD(+) + H2O = ADP-D-ribose + nicotinamide + H(+). NAD(+) hydrolase, which plays a key role in non-apoptotic cell death by regulating NAD(+) metabolism. In response to stress, homooligomerizes and catalyzes cleavage of NAD(+) into ADP-D-ribose (ADPR) and nicotinamide; NAD(+) cleavage promoting non-apoptotic neuronal cell death. In males, involved in non-apoptotic death of the linker cell which guides gonad elongation during larval development. Required for both innate immune response and specification of AWC(OFF) neuron. During late embryogenesis, it acts downstream of CAMKII (unc-43) to regulate specification of asymmetric odorant receptors in AWC(OFF) neuron via the nsy-1/ASK1 pmk-1/p38 MAP kinase signaling cascade. Required to localize nsy-1 to postsynaptic regions of AWC neuron, suggesting that it may act by assembling a signaling complex that regulate odorant receptor expression. Also plays a central role in resistance to infection to a broad range of bacterial and fungi pathogens, possibly by activating pmk-1, independently of the NF-kappa-B pathway. Required for expression of antimicrobial peptides nlp-29 and nlp-31. Its role in immune response and neuron specification may be mediated by the same nsy-1/ASK1 pmk-1/p38 MAP kinase cascade signaling pathway. Involved in the response to anoxic conditions probably by activating the p38 pathway composed of nsy-1/sek-1/pmk-1. Involved in regulation of the serotonergic response of ADF neurons to pathogenic food. In addition, plays a role in the up-regulation of gcs-1 upon arsenite treatment, most likely through activation of pmk-1, to confer protection against toxicity induced by heavy metals. In terms of biological role, regulates expression of antimicrobial peptide nlp-29 in response to fungal infection or physical injury. The protein is NAD(+) hydrolase tir-1 of Caenorhabditis elegans.